Reading from the N-terminus, the 118-residue chain is Small ribosomal subunit protein uS13 (118 aa).

A disordered region spans residues 91 to 118; it reads HRHSLPVRGQRTKTNARTRKGPRKPIRK.

It belongs to the universal ribosomal protein uS13 family. In terms of assembly, part of the 30S ribosomal subunit. Forms a loose heterodimer with protein S19. Forms two bridges to the 50S subunit in the 70S ribosome.

Its function is as follows. Located at the top of the head of the 30S subunit, it contacts several helices of the 16S rRNA. In the 70S ribosome it contacts the 23S rRNA (bridge B1a) and protein L5 of the 50S subunit (bridge B1b), connecting the 2 subunits; these bridges are implicated in subunit movement. Contacts the tRNAs in the A and P-sites. This chain is Small ribosomal subunit protein uS13, found in Hahella chejuensis (strain KCTC 2396).